The following is a 224-amino-acid chain: Biosynthetic peptidoglycan transglycosylase (224 aa).

The helical transmembrane segment at 9-29 (VLILVSFVLLIQLWIFCSLAW) threads the bilayer.

This sequence belongs to the glycosyltransferase 51 family.

Its subcellular location is the cell inner membrane. It catalyses the reaction [GlcNAc-(1-&gt;4)-Mur2Ac(oyl-L-Ala-gamma-D-Glu-L-Lys-D-Ala-D-Ala)](n)-di-trans,octa-cis-undecaprenyl diphosphate + beta-D-GlcNAc-(1-&gt;4)-Mur2Ac(oyl-L-Ala-gamma-D-Glu-L-Lys-D-Ala-D-Ala)-di-trans,octa-cis-undecaprenyl diphosphate = [GlcNAc-(1-&gt;4)-Mur2Ac(oyl-L-Ala-gamma-D-Glu-L-Lys-D-Ala-D-Ala)](n+1)-di-trans,octa-cis-undecaprenyl diphosphate + di-trans,octa-cis-undecaprenyl diphosphate + H(+). It functions in the pathway cell wall biogenesis; peptidoglycan biosynthesis. Functionally, peptidoglycan polymerase that catalyzes glycan chain elongation from lipid-linked precursors. This Acinetobacter baylyi (strain ATCC 33305 / BD413 / ADP1) protein is Biosynthetic peptidoglycan transglycosylase.